The chain runs to 380 residues: WAT1-related protein At2g37460 (380 aa).

The next 10 membrane-spanning stretches (helical) occupy residues 16 to 36 (FISMVVLQVGLAGMDILSKAV), 45 to 65 (VLVVYRHAVATIVMAPFAFYF), 71 to 91 (PKMTLMIFFKISLLGLLEPVI), 107 to 127 (FATAMYNVLPAITFVLAYIFG), 142 to 162 (VVGTLATVGGAMIMTLVKGPV), 187 to 207 (GAVLVTIGCFSYACFMILQAI), 216 to 236 (LSLTAWICLMGTIEGTAVALV), 254 to 274 (LTATYSGIVCSALAYYVGGVV), 282 to 302 (FVTAFSPLCMIIVAIMSTIIF), and 306 to 326 (MYLGRVLGAVVICAGLYLVIW). One can recognise an EamA 1 domain in the interval 27–134 (AGMDILSKAV…IFGLERVKLR (108 aa)). Residues 196 to 325 (FSYACFMILQ…VICAGLYLVI (130 aa)) form the EamA 2 domain.

Belongs to the drug/metabolite transporter (DMT) superfamily. Plant drug/metabolite exporter (P-DME) (TC 2.A.7.4) family.

It localises to the membrane. The chain is WAT1-related protein At2g37460 from Arabidopsis thaliana (Mouse-ear cress).